The following is a 486-amino-acid chain: Cardiolipin synthase A (486 aa).

2 helical membrane passes run 3-23 (TFYTVVSWLVILGYWVLIAGV) and 38-58 (MAWLLIIYILPLVGIIAYLSV). PLD phosphodiesterase domains are found at residues 219–246 (MDLRQHRKMVMIDNYIAYTGSMNMVDPR) and 399–426 (EGGLLHTKSVLVDGELSLVGTVNLDMRS). Catalysis depends on residues histidine 224, lysine 226, aspartate 231, histidine 404, lysine 406, and aspartate 411.

This sequence belongs to the phospholipase D family. Cardiolipin synthase subfamily. ClsA sub-subfamily.

It localises to the cell inner membrane. The enzyme catalyses 2 a 1,2-diacyl-sn-glycero-3-phospho-(1'-sn-glycerol) = a cardiolipin + glycerol. In terms of biological role, catalyzes the reversible phosphatidyl group transfer from one phosphatidylglycerol molecule to another to form cardiolipin (CL) (diphosphatidylglycerol) and glycerol. This chain is Cardiolipin synthase A, found in Salmonella paratyphi A (strain ATCC 9150 / SARB42).